The primary structure comprises 142 residues: Protein spalt-accessory (142 aa).

Residues methionine 1 to alanine 16 form the signal peptide. Over residues glycine 65–alanine 77 the composition is skewed to gly residues. The disordered stretch occupies residues glycine 65 to histidine 142. The span at asparagine 112–histidine 124 shows a compositional bias: basic and acidic residues. Residues arginine 125–histidine 142 are compositionally biased toward basic residues.

It is found in the secreted. Functionally, likely to be involved in the establishment of the head. The protein is Protein spalt-accessory (sala) of Drosophila orena (Fruit fly).